Consider the following 421-residue polypeptide: Carboxypeptidase A4 (421 aa).

Positions 1–16 (MRWILFIGALIGSSIC) are cleaved as a signal peptide. A propeptide spans 17–113 (GQEKFFGDQV…EMQHNEGQER (97 aa)) (activation peptide). A protein contacts are provided by Pro-69, Val-71, Asn-119, Tyr-123, His-124, Ser-125, Glu-127, and Phe-163. The region spanning 122-416 (AYHSLEAIYH…LGLKTIMEHV (295 aa)) is the Peptidase M14 domain. His-181 and Glu-184 together coordinate Zn(2+). The a protein site is built by Arg-196, Lys-197, and Ser-248. Residues Cys-250 and Cys-273 are joined by a disulfide bond. Asn-260 carries N-linked (GlcNAc...) asparagine glycosylation. Asp-270 contributes to the a protein binding site. Zn(2+) is bound at residue His-308. The active-site Proton donor/acceptor is the Glu-382.

Belongs to the peptidase M14 family. As to quaternary structure, monomer. Interacts with LXN. Zn(2+) serves as cofactor. As to expression, fetal expression in the adrenal gland, brain, heart, intestine, kidney, liver and lung. Except for fetal brain that shows no imprinting, expression was found preferentially from the maternal allele.

The protein localises to the secreted. Inhibited by interaction with the metallocarboxypeptidase inhibitor (MCPI) from N.versicolor that binds to the catalytic zinc ion. Also inhibited by interaction with the S.magnifica carboxypeptidase inhibitor SmCI that penetrates the active site groove and inhibits activity by emulating a C-terminal substrate. Additionally inhibited by a carboxypeptidase inhibitor from H.medicinalis (leech) and R.bursa (tick). Metalloprotease that cleaves hydrophobic C-terminal residues with a preference for -Phe, -Leu, -Ile, -Met, -Tyr and -Val. May function in peptide hormone and/or neuropeptide catabolism. The chain is Carboxypeptidase A4 (CPA4) from Homo sapiens (Human).